We begin with the raw amino-acid sequence, 410 residues long: Arginine deiminase (410 aa).

Cysteine 399 serves as the catalytic Amidino-cysteine intermediate.

It belongs to the arginine deiminase family.

The protein localises to the cytoplasm. It carries out the reaction L-arginine + H2O = L-citrulline + NH4(+). It functions in the pathway amino-acid degradation; L-arginine degradation via ADI pathway; carbamoyl phosphate from L-arginine: step 1/2. The sequence is that of Arginine deiminase from Listeria monocytogenes serovar 1/2a (strain ATCC BAA-679 / EGD-e).